The following is a 427-amino-acid chain: tRNA pseudouridine synthase Pus10 (427 aa).

Asp240 serves as the catalytic Nucleophile. Positions 306 and 378 each coordinate substrate.

It belongs to the pseudouridine synthase Pus10 family.

The enzyme catalyses uridine(54) in tRNA = pseudouridine(54) in tRNA. It carries out the reaction uridine(55) in tRNA = pseudouridine(55) in tRNA. Its function is as follows. Responsible for synthesis of pseudouridine from uracil-54 and uracil-55 in the psi GC loop of transfer RNAs. The polypeptide is tRNA pseudouridine synthase Pus10 (Halorubrum lacusprofundi (strain ATCC 49239 / DSM 5036 / JCM 8891 / ACAM 34)).